Here is a 300-residue protein sequence, read N- to C-terminus: Ribosomal RNA small subunit methyltransferase H (300 aa).

S-adenosyl-L-methionine is bound by residues Gly-46–His-48, Asp-65, Phe-92, Asp-107, and Gln-114.

This sequence belongs to the methyltransferase superfamily. RsmH family.

Its subcellular location is the cytoplasm. The catalysed reaction is cytidine(1402) in 16S rRNA + S-adenosyl-L-methionine = N(4)-methylcytidine(1402) in 16S rRNA + S-adenosyl-L-homocysteine + H(+). Specifically methylates the N4 position of cytidine in position 1402 (C1402) of 16S rRNA. The polypeptide is Ribosomal RNA small subunit methyltransferase H (Prochlorococcus marinus (strain MIT 9515)).